Reading from the N-terminus, the 398-residue chain is Elongation factor Tu (398 aa).

The tr-type G domain occupies 10–207 (KIHLNVGTIG…ILDKNIPVPN (198 aa)). Positions 19–26 (GHVDHGKT) are G1. Position 19 to 26 (19 to 26 (GHVDHGKT)) interacts with GTP. Mg(2+) is bound at residue Thr26. The G2 stretch occupies residues 60–64 (GITIS). The interval 81–84 (DCPG) is G3. GTP-binding positions include 81–85 (DCPGH) and 136–139 (NKAD). The segment at 136–139 (NKAD) is G4. A G5 region spans residues 174-176 (SAL).

This sequence belongs to the TRAFAC class translation factor GTPase superfamily. Classic translation factor GTPase family. EF-Tu/EF-1A subfamily. As to quaternary structure, monomer.

The protein localises to the cytoplasm. It catalyses the reaction GTP + H2O = GDP + phosphate + H(+). Its function is as follows. GTP hydrolase that promotes the GTP-dependent binding of aminoacyl-tRNA to the A-site of ribosomes during protein biosynthesis. The protein is Elongation factor Tu of Carsonella ruddii (strain PV).